A 156-amino-acid chain; its full sequence is ATP synthase subunit b (156 aa).

A helical membrane pass occupies residues 7-27 (FFAQMVVFFILWWVVAKFIWP).

This sequence belongs to the ATPase B chain family. F-type ATPases have 2 components, F(1) - the catalytic core - and F(0) - the membrane proton channel. F(1) has five subunits: alpha(3), beta(3), gamma(1), delta(1), epsilon(1). F(0) has three main subunits: a(1), b(2) and c(10-14). The alpha and beta chains form an alternating ring which encloses part of the gamma chain. F(1) is attached to F(0) by a central stalk formed by the gamma and epsilon chains, while a peripheral stalk is formed by the delta and b chains.

The protein resides in the cell inner membrane. F(1)F(0) ATP synthase produces ATP from ADP in the presence of a proton or sodium gradient. F-type ATPases consist of two structural domains, F(1) containing the extramembraneous catalytic core and F(0) containing the membrane proton channel, linked together by a central stalk and a peripheral stalk. During catalysis, ATP synthesis in the catalytic domain of F(1) is coupled via a rotary mechanism of the central stalk subunits to proton translocation. Its function is as follows. Component of the F(0) channel, it forms part of the peripheral stalk, linking F(1) to F(0). The polypeptide is ATP synthase subunit b (Cupriavidus taiwanensis (strain DSM 17343 / BCRC 17206 / CCUG 44338 / CIP 107171 / LMG 19424 / R1) (Ralstonia taiwanensis (strain LMG 19424))).